The following is a 105-amino-acid chain: uncharacterized protein (105 aa).

A compositionally biased stretch (basic residues) spans 1-11 (MPHRNDRRKSA). A disordered region spans residues 1 to 20 (MPHRNDRRKSASKAPNAIIH).

It belongs to the ALB1 family.

It is found in the nucleus. It localises to the nucleolus. This is an uncharacterized protein from Schizosaccharomyces pombe (strain 972 / ATCC 24843) (Fission yeast).